The sequence spans 357 residues: 2-oxoglutarate-dependent dioxygenase 11 (357 aa).

In terms of domain architecture, Fe2OG dioxygenase spans 207–307; it reads QPRGLRMAYY…RISAALFHYP (101 aa). The Fe cation site is built by His231, Asp233, and His288. 2-oxoglutarate is bound at residue Arg298.

This sequence belongs to the iron/ascorbate-dependent oxidoreductase family. The cofactor is Fe(2+). Requires L-ascorbate as cofactor. As to expression, expressed in shoots.

It is found in the cytoplasm. It catalyses the reaction melatonin + 2-oxoglutarate + O2 = 2-hydroxymelatonin + succinate + CO2. In terms of biological role, involved in melatonin degradation. Catalyzes the hydroxylation of melatonin to produce 2-hydroxymelatonin. The chain is 2-oxoglutarate-dependent dioxygenase 11 from Oryza sativa subsp. japonica (Rice).